The primary structure comprises 277 residues: Probable ABC transporter permease protein y4oR (277 aa).

7 consecutive transmembrane segments (helical) span residues 15-35, 79-99, 109-129, 140-160, 189-209, 213-233, and 242-262; these read LWTLFWCVLAFVYLFPYTWMV, VVTIVSVVLVIAVSAPAAYAL, LLVAILVARIIPGIAIGVPVY, TYQALIIINVAVNIPFAIWLM, IMMPLVLGGMLATAVFVFIAV, FLFALILTTSVSPTAPLAMLG, and WDAVGAAAFLVSTPVIAFAFI. In terms of domain architecture, ABC transmembrane type-1 spans 74 to 263; sequence IINSAVVTIV…TPVIAFAFIM (190 aa).

This sequence belongs to the binding-protein-dependent transport system permease family. MalFG subfamily.

The protein localises to the cell inner membrane. Its function is as follows. Probably part of the binding-protein-dependent transport system y4oPQRS. This system probably transports a sugar-like molecule. Probably responsible for the translocation of the substrate across the membrane. This Sinorhizobium fredii (strain NBRC 101917 / NGR234) protein is Probable ABC transporter permease protein y4oR.